The chain runs to 317 residues: Regulator of microtubule dynamics protein 1 (317 aa).

N6-succinyllysine is present on Lys168. 2 TPR repeats span residues 171–207 (AICI…NPKD) and 225–261 (PWYQ…DPNF).

It belongs to the RMDN family. As to quaternary structure, interacts with microtubules.

It localises to the cytoplasm. The protein localises to the cytoskeleton. The protein resides in the spindle. Its subcellular location is the spindle pole. The protein is Regulator of microtubule dynamics protein 1 (RMDN1) of Bos taurus (Bovine).